A 119-amino-acid chain; its full sequence is Protein TusC (119 aa).

Belongs to the DsrF/TusC family. As to quaternary structure, heterohexamer, formed by a dimer of trimers. The hexameric TusBCD complex contains 2 copies each of TusB, TusC and TusD. The TusBCD complex interacts with TusE.

The protein resides in the cytoplasm. Functionally, part of a sulfur-relay system required for 2-thiolation of 5-methylaminomethyl-2-thiouridine (mnm(5)s(2)U) at tRNA wobble positions. The sequence is that of Protein TusC from Shigella sonnei (strain Ss046).